Here is a 529-residue protein sequence, read N- to C-terminus: Delayed-rectifier potassium channel regulatory subunit KCNS1 (529 aa).

The Cytoplasmic portion of the chain corresponds to 1 to 217; sequence MLMLLVRGTH…LTMENPGYSL (217 aa). Residues 218–239 form a helical membrane-spanning segment; it reads PSKLFSCVSISVVLASIAAMCI. The Extracellular segment spans residues 240 to 270; the sequence is HSLPEYQAREAAAAVAAVAAGRSPEGVRDDP. The chain crosses the membrane as a helical span at residues 271–293; that stretch reads VLRRLEYFCIAWFSFEVSSRLLL. The Cytoplasmic segment spans residues 294 to 304; it reads APSTRNFFCHP. A helical transmembrane segment spans residues 305–322; the sequence is LNLIDIVSVLPFYLTLLA. Topologically, residues 323-340 are extracellular; the sequence is GVALGDQGGTGGKELGHL. A helical; Voltage-sensor transmembrane segment spans residues 341-361; sequence GKVVQVFRLMRIFRVLKLARH. Topologically, residues 362 to 376 are cytoplasmic; sequence STGLRSLGATLKHSY. Residues 377 to 398 form a helical membrane-spanning segment; it reads REVGILLLYLAVGVSVFSGVAY. Residues 399 to 411 are Extracellular-facing; that stretch reads TAEKEEDVGFNTI. Positions 412–423 form an intramembrane region, helical; sequence PACWWWGTVSMT. The Selectivity filter motif lies at 424-429; it reads TVGYGD. Residues 424-431 lie within the membrane without spanning it; sequence TVGYGDVV. The Extracellular segment spans residues 432–438; the sequence is PVTVAGK. The helical transmembrane segment at 439 to 467 threads the bilayer; that stretch reads LAASGCILGGILVVALPITIIFNKFSHFY. Over 468–529 the chain is Cytoplasmic; it reads RRQKALEAAV…PSEPPHPQMY (62 aa). The segment at 496 to 529 is disordered; that stretch reads SEASLETSRETSQEGRSADLETQAPSEPPHPQMY. Basic and acidic residues predominate over residues 502 to 514; sequence TSRETSQEGRSAD.

It belongs to the potassium channel family. S (TC 1.A.1.2) subfamily. Kv9.1/KCNS1 sub-subfamily. Heterotetramer with KCNB1. Heterotetramer with KCNB2. Does not form homomultimers.

Its subcellular location is the cell membrane. Its function is as follows. Potassium channel regulatory subunit that modulate the delayed rectifier voltage-gated potassium channel activity of KCNB1 and KCNB2 by altering their kinetics, expression levels, and shifting the half-inactivation potential to more polarized values. While it does not form functional channels on its own, it can form functional heterotetrameric channels with KCNB1 and KCNB2. Each regulatory subunit has unique regulatory properties that can lead to extensive inhibition, significant changes in kinetics, and/or substantial shifts in the voltage dependencies of the inactivation process. The sequence is that of Delayed-rectifier potassium channel regulatory subunit KCNS1 from Papio anubis (Olive baboon).